Reading from the N-terminus, the 226-residue chain is Chalcone--flavanone isomerase 2-A (226 aa).

3 residues coordinate substrate: T49, N114, and S191.

It belongs to the chalcone isomerase family. In terms of tissue distribution, mostly expressed in flowers, and, to a lower extent, in roots, shoots, and seeds.

The enzyme catalyses a chalcone = a flavanone.. It functions in the pathway secondary metabolite biosynthesis; flavonoid biosynthesis. Its function is as follows. Catalyzes the intramolecular cyclization of bicyclic chalcones into tricyclic (S)-flavanones. Responsible for the isomerization of 4,2',4',6'-tetrahydroxychalcone (also termed chalcone) into naringenin. The chain is Chalcone--flavanone isomerase 2-A (CHI2-A) from Glycine max (Soybean).